Here is a 258-residue protein sequence, read N- to C-terminus: MARSGFEVQKVTVEALFLREIRTRFGKFRLGYLWAILEPSAHLLILLGILGYVMHRTMPDISFPVFLLNGLIPFFIFSSISKRSIGAIEANQGLFNYRPVKPIDTIIARALLETLIYVAVYILLMLIVWMTGEYFEITNFLQLVLTWSLLIILSCGVGLIFMVVGKTFPEMQKVLPILLKPLYFISCIMFPLHSIPKQYWSYLLWNPLVHVVELSREAVMPGYISEGVSLNYLAMFTLVTLFIGLALYRTREEAMLTS.

Topologically, residues 1-30 (MARSGFEVQKVTVEALFLREIRTRFGKFRL) are cytoplasmic. Residues 30–251 (LGYLWAILEP…FIGLALYRTR (222 aa)) enclose the ABC transmembrane type-2 domain. The chain crosses the membrane as a helical span at residues 31 to 54 (GYLWAILEPSAHLLILLGILGYVM). Residues 55-61 (HRTMPDI) are Periplasmic-facing. A helical membrane pass occupies residues 62–81 (SFPVFLLNGLIPFFIFSSIS). Residues 82–108 (KRSIGAIEANQGLFNYRPVKPIDTIIA) are Cytoplasmic-facing. Residues 109–132 (RALLETLIYVAVYILLMLIVWMTG) traverse the membrane as a helical segment. Residues 133-143 (EYFEITNFLQL) lie on the Periplasmic side of the membrane. Residues 144–165 (VLTWSLLIILSCGVGLIFMVVG) traverse the membrane as a helical segment. Topologically, residues 166 to 174 (KTFPEMQKV) are cytoplasmic. Residues 175–195 (LPILLKPLYFISCIMFPLHSI) traverse the membrane as a helical segment. The Periplasmic portion of the chain corresponds to 196–226 (PKQYWSYLLWNPLVHVVELSREAVMPGYISE). Residues 227–247 (GVSLNYLAMFTLVTLFIGLAL) traverse the membrane as a helical segment. Over 248-258 (YRTREEAMLTS) the chain is Cytoplasmic.

This sequence belongs to the ABC-2 integral membrane protein family.

It localises to the cell inner membrane. Functionally, kpsM and KpsT constitute a system for the transport of polysialic acid across the cytoplasmic membrane. The chain is Polysialic acid transport protein KpsM (kpsM) from Escherichia coli.